The sequence spans 434 residues: Glutamate/glutamine/aspartate/asparagine transport system permease protein BztC (434 aa).

Helical transmembrane passes span 41–61, 113–133, 135–155, 156–176, 180–200, 227–247, 272–292, 298–318, 360–380, and 398–418; these read LTVF…PWLL, LFVT…DALP, KLIW…WGGP, IWGP…FTAL, LGVP…WLYA, FLLA…LGIL, GVPL…FLPP, LILR…AEVI, IVSS…VGLF, and GTYW…NFSM. An ABC transmembrane type-1 domain is found at 227–422; the sequence is FLLALVIGVT…LFNFSMSRYS (196 aa).

The protein belongs to the binding-protein-dependent transport system permease family. HisMQ subfamily. As to quaternary structure, bztB and BztC form a heterodimer which can form a membrane complex with a homodimer of BztD.

It localises to the cell inner membrane. In terms of biological role, part of a binding-protein-dependent transport system for glutamate, glutamine, aspartate and asparagine. Probably responsible for the translocation of the substrate across the membrane. The chain is Glutamate/glutamine/aspartate/asparagine transport system permease protein BztC (bztC) from Rhodobacter capsulatus (strain ATCC BAA-309 / NBRC 16581 / SB1003).